A 64-amino-acid polypeptide reads, in one-letter code: MKSTLMTASLLILVLLSIIDYASVYAEFIDSEISLERQWINACFNVCMKISSDKKYCKYLCGKS.

The N-terminal stretch at 1-26 (MKSTLMTASLLILVLLSIIDYASVYA) is a signal peptide. Residues 27–36 (EFIDSEISLE) constitute a propeptide that is removed on maturation. Cystine bridges form between Cys43-Cys61 and Cys47-Cys57.

Belongs to the short scorpion toxin superfamily. Potassium channel inhibitor kappa-KTx family. Kappa-KTx 3 subfamily. In terms of tissue distribution, expressed by the venom gland.

The protein resides in the secreted. Potassium channel inhibitor (Kv). The sequence is that of Potassium channel toxin kappa-KTx 3.4 from Heterometrus petersii (Asian forest scorpion).